A 602-amino-acid chain; its full sequence is Elongation factor 4 (602 aa).

Positions 7 to 196 (SKIRNFCIIA…HPQNEIKSPT (190 aa)) constitute a tr-type G domain. GTP contacts are provided by residues 19–24 (DHGKST) and 136–139 (NKVD).

Belongs to the TRAFAC class translation factor GTPase superfamily. Classic translation factor GTPase family. LepA subfamily.

It is found in the cell inner membrane. The enzyme catalyses GTP + H2O = GDP + phosphate + H(+). Required for accurate and efficient protein synthesis under certain stress conditions. May act as a fidelity factor of the translation reaction, by catalyzing a one-codon backward translocation of tRNAs on improperly translocated ribosomes. Back-translocation proceeds from a post-translocation (POST) complex to a pre-translocation (PRE) complex, thus giving elongation factor G a second chance to translocate the tRNAs correctly. Binds to ribosomes in a GTP-dependent manner. In Prochlorococcus marinus (strain MIT 9515), this protein is Elongation factor 4.